Consider the following 290-residue polypeptide: Acetyl-coenzyme A carboxylase carboxyl transferase subunit beta (290 aa).

The region spanning 28–290 (IMTKCPKCKK…TGGEYEWLQD (263 aa)) is the CoA carboxyltransferase N-terminal domain. Zn(2+) is bound by residues Cys-32, Cys-35, Cys-51, and Cys-54. A C4-type zinc finger spans residues 32 to 54 (CPKCKKIMLTKELDKNLRVCMNC).

The protein belongs to the AccD/PCCB family. In terms of assembly, acetyl-CoA carboxylase is a heterohexamer composed of biotin carboxyl carrier protein (AccB), biotin carboxylase (AccC) and two subunits each of ACCase subunit alpha (AccA) and ACCase subunit beta (AccD). Zn(2+) is required as a cofactor.

The protein localises to the cytoplasm. It carries out the reaction N(6)-carboxybiotinyl-L-lysyl-[protein] + acetyl-CoA = N(6)-biotinyl-L-lysyl-[protein] + malonyl-CoA. Its pathway is lipid metabolism; malonyl-CoA biosynthesis; malonyl-CoA from acetyl-CoA: step 1/1. Functionally, component of the acetyl coenzyme A carboxylase (ACC) complex. Biotin carboxylase (BC) catalyzes the carboxylation of biotin on its carrier protein (BCCP) and then the CO(2) group is transferred by the transcarboxylase to acetyl-CoA to form malonyl-CoA. The polypeptide is Acetyl-coenzyme A carboxylase carboxyl transferase subunit beta (Bacillus velezensis (strain DSM 23117 / BGSC 10A6 / LMG 26770 / FZB42) (Bacillus amyloliquefaciens subsp. plantarum)).